A 138-amino-acid chain; its full sequence is Large ribosomal subunit protein uL16c (138 aa).

The tract at residues 1–21 (MLSPQKTKFRKQHRGRMKGVS) is disordered. Basic residues predominate over residues 7-21 (TKFRKQHRGRMKGVS).

The protein belongs to the universal ribosomal protein uL16 family. Part of the 50S ribosomal subunit.

It is found in the plastid. It localises to the chloroplast. The polypeptide is Large ribosomal subunit protein uL16c (Cycas taitungensis (Prince sago)).